The primary structure comprises 357 residues: Elongation factor Ts (357 aa).

The tract at residues 82-85 (TDFV) is involved in Mg(2+) ion dislocation from EF-Tu.

This sequence belongs to the EF-Ts family.

The protein localises to the cytoplasm. Its function is as follows. Associates with the EF-Tu.GDP complex and induces the exchange of GDP to GTP. It remains bound to the aminoacyl-tRNA.EF-Tu.GTP complex up to the GTP hydrolysis stage on the ribosome. The sequence is that of Elongation factor Ts from Campylobacter jejuni subsp. jejuni serotype O:2 (strain ATCC 700819 / NCTC 11168).